A 282-amino-acid polypeptide reads, in one-letter code: Probable endonuclease 4 (282 aa).

9 residues coordinate Zn(2+): histidine 69, histidine 109, glutamate 144, aspartate 178, histidine 181, histidine 215, aspartate 228, histidine 230, and glutamate 260.

It belongs to the AP endonuclease 2 family. Zn(2+) is required as a cofactor.

It carries out the reaction Endonucleolytic cleavage to 5'-phosphooligonucleotide end-products.. In terms of biological role, endonuclease IV plays a role in DNA repair. It cleaves phosphodiester bonds at apurinic or apyrimidinic (AP) sites, generating a 3'-hydroxyl group and a 5'-terminal sugar phosphate. This chain is Probable endonuclease 4, found in Thermosipho africanus (strain TCF52B).